The chain runs to 213 residues: Holliday junction branch migration complex subunit RuvA (213 aa).

The segment at 1–64 (MIARLVGFLV…EDSITLFGFA (64 aa)) is domain I. Residues 65–143 (SYLERDWFRL…AIALFSSAKG (79 aa)) form a domain II region. Positions 144-159 (DHLAVEDISQPAASAH) are flexible linker. The domain III stretch occupies residues 160–213 (HAGNFMADAVSALLNLGFKPAEAQRVVQLASEELGDQATLDSLVRLALRLSSKH).

The protein belongs to the RuvA family. As to quaternary structure, homotetramer. Forms an RuvA(8)-RuvB(12)-Holliday junction (HJ) complex. HJ DNA is sandwiched between 2 RuvA tetramers; dsDNA enters through RuvA and exits via RuvB. An RuvB hexamer assembles on each DNA strand where it exits the tetramer. Each RuvB hexamer is contacted by two RuvA subunits (via domain III) on 2 adjacent RuvB subunits; this complex drives branch migration. In the full resolvosome a probable DNA-RuvA(4)-RuvB(12)-RuvC(2) complex forms which resolves the HJ.

Its subcellular location is the cytoplasm. Its function is as follows. The RuvA-RuvB-RuvC complex processes Holliday junction (HJ) DNA during genetic recombination and DNA repair, while the RuvA-RuvB complex plays an important role in the rescue of blocked DNA replication forks via replication fork reversal (RFR). RuvA specifically binds to HJ cruciform DNA, conferring on it an open structure. The RuvB hexamer acts as an ATP-dependent pump, pulling dsDNA into and through the RuvAB complex. HJ branch migration allows RuvC to scan DNA until it finds its consensus sequence, where it cleaves and resolves the cruciform DNA. The protein is Holliday junction branch migration complex subunit RuvA of Zymomonas mobilis subsp. mobilis (strain ATCC 31821 / ZM4 / CP4).